A 103-amino-acid polypeptide reads, in one-letter code: Large ribosomal subunit protein bL21 (103 aa).

This sequence belongs to the bacterial ribosomal protein bL21 family. As to quaternary structure, part of the 50S ribosomal subunit. Contacts protein L20.

Functionally, this protein binds to 23S rRNA in the presence of protein L20. The polypeptide is Large ribosomal subunit protein bL21 (Burkholderia ambifaria (strain MC40-6)).